A 39-amino-acid polypeptide reads, in one-letter code: Omega-theraphotoxin-Bs1b (39 aa).

Cystine bridges form between Cys-4/Cys-25, Cys-8/Cys-31, and Cys-17/Cys-36.

The protein belongs to the neurotoxin 12 (Hwtx-2) family. 06 (TXP1) subfamily. Expressed by the venom gland.

It localises to the secreted. In terms of biological role, inhibits voltage-gated calcium channels (Cav) in rat cerebellar granule cells. Has insecticidal activity. In Brachypelma smithi (Mexican red knee tarantula), this protein is Omega-theraphotoxin-Bs1b.